The sequence spans 60 residues: UPF0434 protein YcaR (60 aa).

This sequence belongs to the UPF0434 family.

The protein is UPF0434 protein YcaR of Salmonella arizonae (strain ATCC BAA-731 / CDC346-86 / RSK2980).